A 506-amino-acid polypeptide reads, in one-letter code: MKMKLTSLLLKFPEIKLKSFPSGKNPDSIEIEYIQSDSRKTNKNDIFCVADSIGSKKKEFISNAKASLILLRTDSNVLNDLLEVMNSSKIFLECEIDPEQLQGRIASFLLGHPSKDLDIVAVTGTNGKTSLTNILFSLAKDQGINCGLIGTIGVKFGDRVIDTGYTTPDASSLNLILKEMKEEGITTVFMEASSHGLKLGRMNGISVRAGVFTNLTQDHLDFHSDMEDYFESKFRLFEILDFSKSTFAVLDYSAPNGSKLYHKILNRFPDLLIYALDDIYRKWKISDISLNLQGTSYVLGLPGNQERKISTNLLGSFNVRNTALAFLTGIGIGLDLEKMSNSLEKIPQIPGRFQIIYSKDRSRMAVVDYAHTPDALENIIRSVRDSQPKCLITLFGCGGDRDRTKRPKMARIAEELSDQVILTSDNPRTEKPETILDEIQTGFSSGFIPLLREVDRAKAIVEGISCLPEGGCLLVAGKGHEEYQIIGKEKRHFSDVEEVQKAFGLF.

Residue Ser38 participates in UDP-N-acetyl-alpha-D-muramoyl-L-alanyl-D-glutamate binding. 124–130 (GTNGKTS) provides a ligand contact to ATP. Residues 166 to 167 (TT), Ser193, and Arg201 each bind UDP-N-acetyl-alpha-D-muramoyl-L-alanyl-D-glutamate. Lys233 is subject to N6-carboxylysine. Meso-2,6-diaminopimelate-binding positions include Arg401, 425 to 428 (DNPR), Gly477, and Glu481. The Meso-diaminopimelate recognition motif signature appears at 425-428 (DNPR).

It belongs to the MurCDEF family. MurE subfamily. The cofactor is Mg(2+). Carboxylation is probably crucial for Mg(2+) binding and, consequently, for the gamma-phosphate positioning of ATP.

The protein resides in the cytoplasm. The enzyme catalyses UDP-N-acetyl-alpha-D-muramoyl-L-alanyl-D-glutamate + meso-2,6-diaminopimelate + ATP = UDP-N-acetyl-alpha-D-muramoyl-L-alanyl-gamma-D-glutamyl-meso-2,6-diaminopimelate + ADP + phosphate + H(+). It functions in the pathway cell wall biogenesis; peptidoglycan biosynthesis. Its function is as follows. Catalyzes the addition of meso-diaminopimelic acid to the nucleotide precursor UDP-N-acetylmuramoyl-L-alanyl-D-glutamate (UMAG) in the biosynthesis of bacterial cell-wall peptidoglycan. This chain is UDP-N-acetylmuramoyl-L-alanyl-D-glutamate--2,6-diaminopimelate ligase, found in Leptospira interrogans serogroup Icterohaemorrhagiae serovar copenhageni (strain Fiocruz L1-130).